The chain runs to 216 residues: Probable succinyl-CoA:3-ketoacid coenzyme A transferase subunit B (216 aa).

E47 is an active-site residue.

This sequence belongs to the 3-oxoacid CoA-transferase subunit B family. As to quaternary structure, heterodimer of a subunit A and a subunit B.

It carries out the reaction a 3-oxo acid + succinyl-CoA = a 3-oxoacyl-CoA + succinate. The protein is Probable succinyl-CoA:3-ketoacid coenzyme A transferase subunit B (scoB) of Bacillus subtilis (strain 168).